A 347-amino-acid chain; its full sequence is UPF0324 membrane protein Atu0671 (347 aa).

Helical transmembrane passes span 15 to 37, 50 to 72, 105 to 127, 140 to 162, 172 to 194, 201 to 223, 233 to 250, 263 to 282, 287 to 309, and 322 to 344; these read LRWLSPLLPGILICAAVSCAAIL, WLGDLVLAILIGTLLRSLVSLPV, AGGLLIGGIALIVALSLVFSYAA, LIACGNSICGNSAIAAAAPAIGA, AFTAVLGVVAVLLMPFLPQLLGL, IFAGLTVYAVPQVLAATAPLGAV, LIRVLMLGPVIATLSVIH, MVPWFIIGFVLMIMARSFGL, LLSPVASLSNILTIMSMAALGLS, and VIIAASLSLVLLGVLSFGLILLT.

It belongs to the UPF0324 family.

It is found in the cell membrane. The polypeptide is UPF0324 membrane protein Atu0671 (Agrobacterium fabrum (strain C58 / ATCC 33970) (Agrobacterium tumefaciens (strain C58))).